Here is an 85-residue protein sequence, read N- to C-terminus: Large ribosomal subunit protein bL27 (85 aa).

The tract at residues 1-21 is disordered; sequence MAHKKAGGSTRNGRDSESKRL.

The protein belongs to the bacterial ribosomal protein bL27 family.

The chain is Large ribosomal subunit protein bL27 from Pseudomonas entomophila (strain L48).